Reading from the N-terminus, the 396-residue chain is uncharacterized protein (396 aa).

Positions 8, 14, 17, and 95 each coordinate [4Fe-4S] cluster. Residues Gln229, Tyr258, Glu279, and Asp325 each contribute to the S-adenosyl-L-methionine site. Cys352 serves as the catalytic Nucleophile.

It belongs to the class I-like SAM-binding methyltransferase superfamily. RNA M5U methyltransferase family.

This is an uncharacterized protein from Chlamydia trachomatis serovar D (strain ATCC VR-885 / DSM 19411 / UW-3/Cx).